The sequence spans 47 residues: Photosystem II reaction center protein K (47 aa).

A propeptide spanning residues methionine 1–alanine 10 is cleaved from the precursor. The helical transmembrane segment at phenylalanine 19 to valine 39 threads the bilayer.

Belongs to the PsbK family. PSII is composed of 1 copy each of membrane proteins PsbA, PsbB, PsbC, PsbD, PsbE, PsbF, PsbH, PsbI, PsbJ, PsbK, PsbL, PsbM, PsbT, PsbX, PsbY, PsbZ, Psb30/Ycf12, peripheral proteins PsbO, CyanoQ (PsbQ), PsbU, PsbV and a large number of cofactors. It forms dimeric complexes.

Its subcellular location is the cellular thylakoid membrane. One of the components of the core complex of photosystem II (PSII). PSII is a light-driven water:plastoquinone oxidoreductase that uses light energy to abstract electrons from H(2)O, generating O(2) and a proton gradient subsequently used for ATP formation. It consists of a core antenna complex that captures photons, and an electron transfer chain that converts photonic excitation into a charge separation. The protein is Photosystem II reaction center protein K of Parasynechococcus marenigrum (strain WH8102).